The primary structure comprises 419 residues: Serine--tRNA ligase (419 aa).

Position 226 to 228 (Thr226 to Glu228) interacts with L-serine. Residues Arg257–Glu259 and Val273 each bind ATP. L-serine is bound at residue Glu280. Residue Glu344–Ser347 coordinates ATP. An L-serine-binding site is contributed by Thr379.

The protein belongs to the class-II aminoacyl-tRNA synthetase family. Type-1 seryl-tRNA synthetase subfamily. Homodimer. The tRNA molecule binds across the dimer.

The protein resides in the cytoplasm. The enzyme catalyses tRNA(Ser) + L-serine + ATP = L-seryl-tRNA(Ser) + AMP + diphosphate + H(+). The catalysed reaction is tRNA(Sec) + L-serine + ATP = L-seryl-tRNA(Sec) + AMP + diphosphate + H(+). Its pathway is aminoacyl-tRNA biosynthesis; selenocysteinyl-tRNA(Sec) biosynthesis; L-seryl-tRNA(Sec) from L-serine and tRNA(Sec): step 1/1. Functionally, catalyzes the attachment of serine to tRNA(Ser). Is also able to aminoacylate tRNA(Sec) with serine, to form the misacylated tRNA L-seryl-tRNA(Sec), which will be further converted into selenocysteinyl-tRNA(Sec). In Mycolicibacterium vanbaalenii (strain DSM 7251 / JCM 13017 / BCRC 16820 / KCTC 9966 / NRRL B-24157 / PYR-1) (Mycobacterium vanbaalenii), this protein is Serine--tRNA ligase.